A 114-amino-acid chain; its full sequence is Turripeptide OL22 (114 aa).

Post-translationally, contains 6 disulfide bonds. Expressed by the venom duct.

It is found in the secreted. In terms of biological role, acts as a neurotoxin by inhibiting an ion channel. This chain is Turripeptide OL22, found in Iotyrris olangoensis (Sea snail).